The following is a 381-amino-acid chain: MVNYHGRKEVSNILTSEEYEELKGQNFLKLSVSKTEYFDLFLLGVGLYAPLEGFMDEDDYYSTLEQFTLSSGFLWSIPIVLRVSEEEARLYDGREKVLLTAANGELLGLLESPRAFKLNKILEVEKVFKTSSPEHPGVQKILGEDEWAVAGKIKIYPPAFREIDLNLSLFPQKTREIFKSRNYKTVVGFQTRNPIHRAHEYLQKIALEIFDGLFVNPLVGETKGDDIPADVRLKCYEALLNNYYPKDRFVFATLPAPMRYAGPREAVHHAIIRQNYGCTHFIVGRDHAGVGNFYGPFEAQEIFDTFPENALEIKIVKFDNAFYCSKCGQMATKKTCPHGPEHHLSLSGTKVREMLREGKPLPEEFTRPEVAEVLRRYYQSL.

It belongs to the sulfate adenylyltransferase family.

It carries out the reaction sulfate + ATP + H(+) = adenosine 5'-phosphosulfate + diphosphate. It functions in the pathway sulfur metabolism; hydrogen sulfide biosynthesis; sulfite from sulfate: step 1/3. This is Sulfate adenylyltransferase from Carboxydothermus hydrogenoformans (strain ATCC BAA-161 / DSM 6008 / Z-2901).